Consider the following 416-residue polypeptide: Putative cell agglutination protein SPAC1348.08c (416 aa).

Positions 1–27 (MNFFLYFRTIFLIQLYFFNYSTFGCSA) are cleaved as a signal peptide. Residue asparagine 19 is glycosylated (N-linked (GlcNAc...) asparagine). 2 consecutive repeat copies span residues 90–124 (GTVTETTISGSTEYTTTIPAEGITSGTVEIVEPTA) and 125–160 (GTVTETITSGTLPFTTTLAQASGTVSGTVEIVSPKN). The interval 90–160 (GTVTETTISG…GTVEIVSPKN (71 aa)) is 2 X 36 AA approximate tandem repeats. Residues 224 to 390 (FNEPAYFGSS…GPLATTSYSY (167 aa)) enclose the PA14 domain. Asparagine 344 carries N-linked (GlcNAc...) asparagine glycosylation.

It is found in the cell surface. Its function is as follows. May be involved in agglutination during conjugation or other aspects of colony formation. This is Putative cell agglutination protein SPAC1348.08c from Schizosaccharomyces pombe (strain 972 / ATCC 24843) (Fission yeast).